Here is an 86-residue protein sequence, read N- to C-terminus: Acyl-CoA-binding protein homolog (86 aa).

One can recognise an ACB domain in the interval 2–86 (VSEQFNAAAE…FVEGLVAKYA (85 aa)). An acyl-CoA contacts are provided by residues Lys-14, 29-33 (YALFK), Lys-51, Lys-55, and Tyr-74.

The protein belongs to the ACBP family. Expressed in larval and pupal brains. In adults, expressed in cardia, part of the Malpighian tubules, fat body, and gametes of both sexes.

Functionally, binds medium- and long-chain acyl-CoA esters with very high affinity and may function as an intracellular carrier of acyl-CoA esters. May be involved in energy metabolism in a manner that depends on the substrate used for energy production. Dbi and its metabolites are involved in the regulation of multiple biological processes. This chain is Acyl-CoA-binding protein homolog, found in Drosophila melanogaster (Fruit fly).